Consider the following 96-residue polypeptide: Basic blue protein (96 aa).

One can recognise a Phytocyanin domain in the interval 1–96 (AVYVVGGSGG…SGMKIAVNAL (96 aa)). The Cu cation site is built by His39, Cys79, His84, and Met89. A disulfide bridge connects residues Cys52 and Cys85.

The chain is Basic blue protein from Cucumis sativus (Cucumber).